The chain runs to 328 residues: RNA 3'-terminal phosphate cyclase (328 aa).

ATP contacts are provided by residues Gln100 and 276-280; that span reads HLADQ. The Tele-AMP-histidine intermediate role is filled by His302.

The protein belongs to the RNA 3'-terminal cyclase family. Type 1 subfamily.

Its subcellular location is the cytoplasm. It catalyses the reaction a 3'-end 3'-phospho-ribonucleotide-RNA + ATP = a 3'-end 2',3'-cyclophospho-ribonucleotide-RNA + AMP + diphosphate. Catalyzes the conversion of 3'-phosphate to a 2',3'-cyclic phosphodiester at the end of RNA. The mechanism of action of the enzyme occurs in 3 steps: (A) adenylation of the enzyme by ATP; (B) transfer of adenylate to an RNA-N3'P to produce RNA-N3'PP5'A; (C) and attack of the adjacent 2'-hydroxyl on the 3'-phosphorus in the diester linkage to produce the cyclic end product. The biological role of this enzyme is unknown but it is likely to function in some aspects of cellular RNA processing. This is RNA 3'-terminal phosphate cyclase (rtcA) from Archaeoglobus fulgidus (strain ATCC 49558 / DSM 4304 / JCM 9628 / NBRC 100126 / VC-16).